Consider the following 273-residue polypeptide: Serine acetyltransferase (273 aa).

It belongs to the transferase hexapeptide repeat family. As to quaternary structure, homohexamer. Dimer of a homotrimer.

The protein localises to the cytoplasm. It catalyses the reaction L-serine + acetyl-CoA = O-acetyl-L-serine + CoA. It functions in the pathway amino-acid biosynthesis; L-cysteine biosynthesis; L-cysteine from L-serine: step 1/2. This is Serine acetyltransferase (cysE) from Shigella flexneri.